Consider the following 157-residue polypeptide: uncharacterized protein (157 aa).

Residues 9–146 form the N-acetyltransferase domain; that stretch reads LLINYKTLDE…GDFYVWHPET (138 aa).

This is an uncharacterized protein from Bacillus cereus (strain ZK / E33L).